The primary structure comprises 456 residues: Argininosuccinate lyase (456 aa).

The protein belongs to the lyase 1 family. Argininosuccinate lyase subfamily.

It localises to the cytoplasm. It catalyses the reaction 2-(N(omega)-L-arginino)succinate = fumarate + L-arginine. Its pathway is amino-acid biosynthesis; L-arginine biosynthesis; L-arginine from L-ornithine and carbamoyl phosphate: step 3/3. In Listeria monocytogenes serotype 4b (strain F2365), this protein is Argininosuccinate lyase.